The following is a 505-amino-acid chain: MLKVIPWLLVTSSLVAIPTYIHATTEVVVNLNVKHSVEGKSEFERKNHIKLHSTLNDNDWQGEEDKLKYMMEELDVYFGRDNGGTVWNFNQAIEDPANIGYADPQNIIARGQAQRETNWGQNKSALHQYDGRGDLMIGGQPRAHYLGNTSPCCGGSAWQAKGGDAVGDFLGQYVNEFFRSAGDPVTKGHLAPVYFEVLNEPLYQVTDAPHELGLEQPIPPIDIFTFHNDVADAFRQHNTHIKIGGFTVAFPIFEQREFARWEERMKLFIDTSGSHMDVYSTHFYDLEDDNRFKGSRLEATLDMIDQYSLLALGETKPHVISEYGGRNRPMENAPWSALRDWWFLKTASPMLMQFLSRPDSVLTSIPFVPIKALWGTAADGTPYNWRLLRQQKEAPNETGENWVFTEMVKFYQLWSDVKGTRVDTFSTNSDFLIDSYVQNDKAYVLISNLTEQAEKIVVHKYGAPASSQPTTRIKHLYLKGAAPRLMKQVMRQISKKSRLLLKRLW.

Residues 1–23 (MLKVIPWLLVTSSLVAIPTYIHA) form the signal peptide. Residue glutamate 200 is the Proton donor of the active site. The active-site Nucleophile is the glutamate 322.

This sequence belongs to the glycosyl hydrolase 86 family.

It localises to the secreted. It carries out the reaction Hydrolysis of (1-&gt;4)-beta-D-galactosidic linkages in agarose, giving the tetramer as the predominant product.. Its function is as follows. Hydrolase that cleaves agar at the (1-&gt;4) linkage, producing tetrameric saccharide molecules. Is specific for agar and agarose and does not digest alginate or carrageenan. In Pseudoalteromonas atlantica (Alteromonas atlantica), this protein is Beta-agarase.